A 65-amino-acid polypeptide reads, in one-letter code: Large ribosomal subunit protein bL35 (65 aa).

This sequence belongs to the bacterial ribosomal protein bL35 family.

This Baumannia cicadellinicola subsp. Homalodisca coagulata protein is Large ribosomal subunit protein bL35.